Here is a 135-residue protein sequence, read N- to C-terminus: Small ribosomal subunit protein uS17 (135 aa).

The tract at residues 1–59 (MAEAKTGAKAAPRVAKAAKAAPKKAAPNDAEAIGAANAANVKGPKHTPRTPKPRGRRKT) is disordered. Positions 8-42 (AKAAPRVAKAAKAAPKKAAPNDAEAIGAANAANVK) are enriched in low complexity. The segment covering 43–59 (GPKHTPRTPKPRGRRKT) has biased composition (basic residues).

The protein belongs to the universal ribosomal protein uS17 family. Part of the 30S ribosomal subunit.

In terms of biological role, one of the primary rRNA binding proteins, it binds specifically to the 5'-end of 16S ribosomal RNA. The protein is Small ribosomal subunit protein uS17 of Mycobacterium bovis (strain ATCC BAA-935 / AF2122/97).